We begin with the raw amino-acid sequence, 82 residues long: SMPPQVMVEINGMLNDGCTAFHEAKQVVEGNTIKIEVTTIRPKDAMCTQEISPFSTTIQVDAQLQPGEYTILVNDVAEALKL.

Could be a silencing control element for the regulation of the restriction system. This is an uncharacterized protein from Herpetosiphon aurantiacus (Herpetosiphon giganteus).